A 225-amino-acid polypeptide reads, in one-letter code: Cytidylate kinase (225 aa).

10–18 (GPASSGKST) provides a ligand contact to ATP.

This sequence belongs to the cytidylate kinase family. Type 1 subfamily.

Its subcellular location is the cytoplasm. The catalysed reaction is CMP + ATP = CDP + ADP. It catalyses the reaction dCMP + ATP = dCDP + ADP. The protein is Cytidylate kinase of Streptococcus gordonii (strain Challis / ATCC 35105 / BCRC 15272 / CH1 / DL1 / V288).